The sequence spans 40 residues: Antimicrobial peptide 1 (40 aa).

In terms of domain architecture, Chitin-binding type-1 spans 1–40 (AQCGAQGGGATCPGGLCCSQWGWCGSTPKYCGAGCQSNCK). 4 cysteine pairs are disulfide-bonded: cysteine 3–cysteine 18, cysteine 12–cysteine 24, cysteine 17–cysteine 31, and cysteine 35–cysteine 39.

Post-translationally, not glycosylated.

Its function is as follows. Antimicrobial peptide active against plant pathogenic fungi and Gram-negative and -positive bacteria. The chain is Antimicrobial peptide 1 from Fagopyrum esculentum (Common buckwheat).